The following is a 421-amino-acid chain: UPF0415 protein C7orf25 homolog (421 aa).

Belongs to the UPF0415 family.

The sequence is that of UPF0415 protein C7orf25 homolog from Bos taurus (Bovine).